We begin with the raw amino-acid sequence, 817 residues long: DNA gyrase subunit A (817 aa).

Residues 39-505 (LPDARDGLKP…AVEDVSIEDL (467 aa)) form the Topo IIA-type catalytic domain. The O-(5'-phospho-DNA)-tyrosine intermediate role is filled by Tyr-127. Positions 532–538 (QGRGGKG) match the GyrA-box motif.

This sequence belongs to the type II topoisomerase GyrA/ParC subunit family. In terms of assembly, heterotetramer, composed of two GyrA and two GyrB chains. In the heterotetramer, GyrA contains the active site tyrosine that forms a transient covalent intermediate with DNA, while GyrB binds cofactors and catalyzes ATP hydrolysis.

It is found in the cytoplasm. The catalysed reaction is ATP-dependent breakage, passage and rejoining of double-stranded DNA.. Functionally, a type II topoisomerase that negatively supercoils closed circular double-stranded (ds) DNA in an ATP-dependent manner to modulate DNA topology and maintain chromosomes in an underwound state. Negative supercoiling favors strand separation, and DNA replication, transcription, recombination and repair, all of which involve strand separation. Also able to catalyze the interconversion of other topological isomers of dsDNA rings, including catenanes and knotted rings. Type II topoisomerases break and join 2 DNA strands simultaneously in an ATP-dependent manner. This is DNA gyrase subunit A from Aminobacterium colombiense (strain DSM 12261 / ALA-1).